The sequence spans 245 residues: Small ribosomal subunit protein uS2 (245 aa).

This sequence belongs to the universal ribosomal protein uS2 family.

This chain is Small ribosomal subunit protein uS2, found in Pseudomonas putida (strain ATCC 47054 / DSM 6125 / CFBP 8728 / NCIMB 11950 / KT2440).